The chain runs to 838 residues: MTDTTLPPDDSLDRIEPVDIEQEMQRSYIDYAMSVIVGRALPEVRDGLKPVHRRVLYAMFDSGFRPDRSHAKSARSVAETMGNYHPHGDASIYDSLVRMAQPWSLRYPLVDGQGNFGSPGNDPPAAMRYTEARLTPLAMEMLREIDEETVDFIPNYDGRVQEPTVLPSRFPNLLANGSGGIAVGMATNIPPHNLRELADAVFWALENHDADEEETLAAVMGRVKGPDFPTAGLIVGSQGTADAYKTGRGSIRMRGVVEVEEDSRGRTSLVITELPYQVNHDNFITSIAEQVRDGKLAGISNIEDQSSDRVGLRIVIEIKRDAVAKVVINNLYKHTQLQTSFGANMLAIVDGVPRTLRLDQLIRYYVDHQLDVIVRRTTYRLRKANERAHILRGLVKALDALDEVIALIRASETVDIARAGLIELLDIDEIQAQAILDMQLRRLAALERQRIIDDLAKIEAEIADLEDILAKPERQRGIVRDELAEIVDRHGDDRRTRIIAADGDVSDEDLIAREDVVVTITETGYAKRTKTDLYRSQKRGGKGVQGAGLKQDDIVAHFFVCSTHDLILFFTTQGRVYRAKAYDLPEASRTARGQHVANLLAFQPEERIAQVIQIRGYTDAPYLVLATRNGLVKKSKLTDFDSNRSGGIVAVNLRDNDELVGAVLCSAGDDLLLVSANGQSIRFSATDEALRPMGRATSGVQGMRFNIDDRLLSLNVVREGTYLLVATSGGYAKRTAIEEYPVQGRGGKGVLTVMYDRRRGRLVGALIVDDDSELYAVTSGGGVIRTAARQVRKAGRQTKGVRLMNLGEGDTLLAIARNAEESGDDNAVDANGADQTGN.

Thr2 carries the N-acetylthreonine modification. Residues 41-510 (LPEVRDGLKP…ADGDVSDEDL (470 aa)) enclose the Topo IIA-type catalytic domain. Tyr129 serves as the catalytic O-(5'-phospho-DNA)-tyrosine intermediate. Ca(2+) is bound by residues Asp504, Ser506, Glu508, and Asp515. An EF-hand domain is found at 504–516 (DVSDEDLIAREDV). A C-terminal domain CTD region spans residues 514-838 (EDVVVTITET…DANGADQTGN (325 aa)). The GyrA-box motif lies at 537 to 543 (QKRGGKG). The GyrA-box-1 motif lies at 743-749 (QGRGGKG).

This sequence belongs to the type II topoisomerase GyrA/ParC subunit family. Heterotetramer, composed of two GyrA and two GyrB chains. In the heterotetramer, GyrA contains the active site tyrosine that forms a transient covalent intermediate with DNA, while GyrB binds cofactors and catalyzes ATP hydrolysis. Ca(2+) is required as a cofactor.

The protein localises to the cytoplasm. The catalysed reaction is ATP-dependent breakage, passage and rejoining of double-stranded DNA.. DNA supercoiling inhibited by (fluoro)quinoline antibiotics such as sparfloxacin and levofloxacin, which usually act on GyrA. DNA supercoiling inhibited by the coumarin antibiotic novobiocin which acts on GyrB. Quinolones lead to gyrase-mediated dsDNA cleavage while preventing reclosure. DNA supercoiling activity inhibited by aminopyrazinamide and pyrrolamide derivatives, probably via effects on the GyrB subunit. DNA relaxation inhibited by ATP and its analogs. DNA supercoiling, relaxation, decatenation and quinolone-promoted DNA cleavage are inhibited by MfpA (50% inhibition occurs at 2 uM), inhibition of gyrase activities is enhanced in a concentration-dependent manner by MfpA. In terms of biological role, a type II topoisomerase that negatively supercoils closed circular double-stranded (ds) DNA in an ATP-dependent manner to maintain chromosomes in an underwound state, while in the absence of ATP it relaxes supercoiled dsDNA. Also catalyzes the interconversion of other topological isomers of dsDNA rings, including catenanes. Gyrase from M.tuberculosis has higher decatenation than supercoiling activity compared to E.coli; as M.tuberculosis only has 1 type II topoisomerase, gyrase has to fulfill the decatenation function of topoisomerase IV as well. At comparable concentrations M.tuberculosis gyrase cannot introduce as many negative supercoils into DNA as the E.coli enzyme, and its ATPase activity is lower, perhaps because it does not couple DNA wrapping and ATP binding as well as E.coli. Its function is as follows. Negative supercoiling favors strand separation, and DNA replication, transcription, recombination and repair, all of which involve strand separation. Type II topoisomerases break and join 2 DNA strands simultaneously in an ATP-dependent manner. This chain is DNA gyrase subunit A, found in Mycobacterium tuberculosis (strain ATCC 25618 / H37Rv).